A 210-amino-acid chain; its full sequence is Probable GTP-binding protein EngB (210 aa).

One can recognise an EngB-type G domain in the interval 30 to 204 (QGYEVAFAGR…YKVLAGWMEL (175 aa)). Residues 38–45 (GRSNAGKS), 64–68 (GRTQL), 82–85 (DLPG), 149–152 (TKAD), and 182–185 (LFSA) each bind GTP. Mg(2+)-binding residues include Ser45 and Thr66.

This sequence belongs to the TRAFAC class TrmE-Era-EngA-EngB-Septin-like GTPase superfamily. EngB GTPase family. It depends on Mg(2+) as a cofactor.

Functionally, necessary for normal cell division and for the maintenance of normal septation. This Pseudomonas putida (strain W619) protein is Probable GTP-binding protein EngB.